Here is a 616-residue protein sequence, read N- to C-terminus: Dihydroxy-acid dehydratase (616 aa).

Residue Asp81 coordinates Mg(2+). [2Fe-2S] cluster is bound at residue Cys122. Residues Asp123 and Lys124 each coordinate Mg(2+). Residue Lys124 is modified to N6-carboxylysine. Position 195 (Cys195) interacts with [2Fe-2S] cluster. Mg(2+) is bound at residue Glu491. The Proton acceptor role is filled by Ser517.

The protein belongs to the IlvD/Edd family. As to quaternary structure, homodimer. It depends on [2Fe-2S] cluster as a cofactor. Requires Mg(2+) as cofactor.

It carries out the reaction (2R)-2,3-dihydroxy-3-methylbutanoate = 3-methyl-2-oxobutanoate + H2O. It catalyses the reaction (2R,3R)-2,3-dihydroxy-3-methylpentanoate = (S)-3-methyl-2-oxopentanoate + H2O. The protein operates within amino-acid biosynthesis; L-isoleucine biosynthesis; L-isoleucine from 2-oxobutanoate: step 3/4. It participates in amino-acid biosynthesis; L-valine biosynthesis; L-valine from pyruvate: step 3/4. Functions in the biosynthesis of branched-chain amino acids. Catalyzes the dehydration of (2R,3R)-2,3-dihydroxy-3-methylpentanoate (2,3-dihydroxy-3-methylvalerate) into 2-oxo-3-methylpentanoate (2-oxo-3-methylvalerate) and of (2R)-2,3-dihydroxy-3-methylbutanoate (2,3-dihydroxyisovalerate) into 2-oxo-3-methylbutanoate (2-oxoisovalerate), the penultimate precursor to L-isoleucine and L-valine, respectively. This Salmonella typhi protein is Dihydroxy-acid dehydratase.